A 316-amino-acid chain; its full sequence is Very long chain fatty acid elongase 6 (316 aa).

Asparagine 11 is a glycosylation site (N-linked (GlcNAc...) asparagine). 6 consecutive transmembrane segments (helical) span residues 30–50, 64–84, 117–137, 142–162, 167–189, and 202–222; these read WMLENWTWVFYYCGIYMLVIF, LRGPLIIWNTLLAMFSIMGAA, FWTWLFVLSKLPELGDTIFIV, PLIFLHWYHHITVLIYSWFSY, SSARWFIVMNYCVHSVMYSYYAL, and MIITSLQLAQMIIGCAINVWA. N-linked (GlcNAc...) asparagine glycosylation is present at asparagine 242. A helical transmembrane segment spans residues 245–265; it reads IAMYSSYFVLFARFFYKAYLA.

It belongs to the ELO family. ELOVL6 subfamily. In terms of tissue distribution, detected in the CNS (central nervous system) of third larval instar (at protein level). Expressed in cyst progenitor cells (at protein level). In the adult fly, expressed in several tissues including, sperm, follicular epithelium, nurse cells and cyst cells.

The protein resides in the mitochondrion outer membrane. It is found in the endoplasmic reticulum membrane. The enzyme catalyses a very-long-chain acyl-CoA + malonyl-CoA + H(+) = a very-long-chain 3-oxoacyl-CoA + CO2 + CoA. It carries out the reaction hexadecanoyl-CoA + malonyl-CoA + H(+) = 3-oxooctadecanoyl-CoA + CO2 + CoA. Its pathway is lipid metabolism; fatty acid biosynthesis. Functionally, catalyzes the first and rate-limiting reaction of the four reactions that constitute the long-chain fatty acids elongation cycle. This process allows the addition of 2 carbons to the chain of long- and very long-chain fatty acids (VLCFAs) per cycle. Condensing enzyme that elongates fatty acids with 12, 14 and 16 carbons with higher activity toward C16:0 acyl-CoAs. Catalyzes the synthesis of unsaturated C16 long chain fatty acids and, to a lesser extent, C18:0 and those with low desaturation degree. May participate in the production of saturated and monounsaturated VLCFAs of different chain lengths that are involved in multiple biological processes as precursors of membrane lipids and lipid mediators. In Drosophila melanogaster (Fruit fly), this protein is Very long chain fatty acid elongase 6.